A 485-amino-acid chain; its full sequence is MKLKEVLKKLEYNILNGNIEIDIENIQYDSRNIKKNDIFFAIQGYSTDGHKFIESAIEKGAKVIVFDKGFENENMYKDITFIKVKNSRKALAVAASNYYGNPKDKLKLIGVTGTNGKTTSTFMIKSILEEAGFKVGLMGTILNYIGDRKIYAQRTTPESLEIHKLFKDMVDSGVDYCVMEVSSHSLYLDRVYGIEFNEGIFTNLTQDHLDFHKTFENYYNSKLMLFKNSINSVINIDDNYGERILKEIEEKTFTYSIKKYSDLKAESVRLHSRGGEFTVDFKGNKEKINIHIPGEYNVSNALGSILACVNEGISLKVIKRGLEKLSGVPGRCEIVTMGYNLGYDVIVDYAHTPDGLDNVLRTARDFTKGKLISVYGCGGDRDRAKRPIMGRIGTELSDLAILTSDNPRTEEPFSIIDDIVKGVTKDNYIIVQSRREAIKKAMTIAKKDDVIVVAGKGHEDYQILKDKTIHFDEREVIKEIIEELY.

Residue Ser30 participates in UDP-N-acetyl-alpha-D-muramoyl-L-alanyl-D-glutamate binding. ATP is bound at residue 113–119; the sequence is GTNGKTT. UDP-N-acetyl-alpha-D-muramoyl-L-alanyl-D-glutamate contacts are provided by residues 155–156, Ser182, and Arg190; that span reads TT. Lys222 is modified (N6-carboxylysine). Residues Arg381, 405 to 408, Gly455, and Glu459 each bind meso-2,6-diaminopimelate; that span reads DNPR. The short motif at 405-408 is the Meso-diaminopimelate recognition motif element; sequence DNPR.

This sequence belongs to the MurCDEF family. MurE subfamily. The cofactor is Mg(2+). Carboxylation is probably crucial for Mg(2+) binding and, consequently, for the gamma-phosphate positioning of ATP.

The protein localises to the cytoplasm. The catalysed reaction is UDP-N-acetyl-alpha-D-muramoyl-L-alanyl-D-glutamate + meso-2,6-diaminopimelate + ATP = UDP-N-acetyl-alpha-D-muramoyl-L-alanyl-gamma-D-glutamyl-meso-2,6-diaminopimelate + ADP + phosphate + H(+). It participates in cell wall biogenesis; peptidoglycan biosynthesis. Catalyzes the addition of meso-diaminopimelic acid to the nucleotide precursor UDP-N-acetylmuramoyl-L-alanyl-D-glutamate (UMAG) in the biosynthesis of bacterial cell-wall peptidoglycan. The sequence is that of UDP-N-acetylmuramoyl-L-alanyl-D-glutamate--2,6-diaminopimelate ligase from Clostridium tetani (strain Massachusetts / E88).